We begin with the raw amino-acid sequence, 363 residues long: Chorismate synthase (363 aa).

NADP(+) contacts are provided by Arg-48 and Arg-54. Residues 125-127, 237-238, Gly-277, 292-296, and Arg-318 each bind FMN; these read RSS, NA, and KPTSS.

This sequence belongs to the chorismate synthase family. As to quaternary structure, homotetramer. FMNH2 serves as cofactor.

The catalysed reaction is 5-O-(1-carboxyvinyl)-3-phosphoshikimate = chorismate + phosphate. It participates in metabolic intermediate biosynthesis; chorismate biosynthesis; chorismate from D-erythrose 4-phosphate and phosphoenolpyruvate: step 7/7. Functionally, catalyzes the anti-1,4-elimination of the C-3 phosphate and the C-6 proR hydrogen from 5-enolpyruvylshikimate-3-phosphate (EPSP) to yield chorismate, which is the branch point compound that serves as the starting substrate for the three terminal pathways of aromatic amino acid biosynthesis. This reaction introduces a second double bond into the aromatic ring system. This chain is Chorismate synthase, found in Pseudomonas putida (strain ATCC 700007 / DSM 6899 / JCM 31910 / BCRC 17059 / LMG 24140 / F1).